The chain runs to 300 residues: Ribosomal protein L11 methyltransferase (300 aa).

Residues Thr144, Gly165, Asp187, and Asn235 each coordinate S-adenosyl-L-methionine.

Belongs to the methyltransferase superfamily. PrmA family.

It is found in the cytoplasm. It carries out the reaction L-lysyl-[protein] + 3 S-adenosyl-L-methionine = N(6),N(6),N(6)-trimethyl-L-lysyl-[protein] + 3 S-adenosyl-L-homocysteine + 3 H(+). Functionally, methylates ribosomal protein L11. This Prochlorococcus marinus (strain MIT 9515) protein is Ribosomal protein L11 methyltransferase.